We begin with the raw amino-acid sequence, 577 residues long: Cryptochrome DASH, chloroplastic/mitochondrial (577 aa).

The N-terminal 53 residues, 1–53, are a transit peptide targeting the chloroplast and mitochondrion; sequence MIKQPFLLTKFTPFSSKSKHTLFTFHCNFSIKMASLTARTTPTVQNVPGLTPE. In terms of domain architecture, Photolyase/cryptochrome alpha/beta spans 78 to 219; the sequence is GVAIVWFRND…GNDPGSGNTT (142 aa). Positions 550 to 577 are disordered; that stretch reads TKKTGDSKTAFSSRRGRPEDNRRKRHGY.

It belongs to the DNA photolyase class-1 family. It depends on FAD as a cofactor. (6R)-5,10-methylene-5,6,7,8-tetrahydrofolate is required as a cofactor. Expressed in the endosperm and embryo 96 hours after seed imbibition. In the embryo, detected in the root meristem, the root cap, the shoot apical meristem and the epidermis of cotyledons. In adult plants, detcted in roots, the whole leaf lamina, the stem and in glandular trichomes.

The protein resides in the plastid. It is found in the chloroplast. It localises to the mitochondrion. May have a photoreceptor function and might bind ss- and ds-DNA in a sequence non-specific manner. Lacks photolyase activity. Has a potential role in detecting the dawn and dusk transitions and, consequently, in circadian input pathways. The chain is Cryptochrome DASH, chloroplastic/mitochondrial from Solanum lycopersicum (Tomato).